Here is a 276-residue protein sequence, read N- to C-terminus: UPF0328 protein ECU04_0100 (276 aa).

Residues 1 to 24 are disordered; it reads MGIIDVQRSHLTATPSKERDAPAH.

It belongs to the UPF0328 family.

The chain is UPF0328 protein ECU04_0100 from Encephalitozoon cuniculi (strain GB-M1) (Microsporidian parasite).